We begin with the raw amino-acid sequence, 70 residues long: Delta-hexatoxin-Mg1b (70 aa).

The N-terminal stretch at 1-26 is a signal peptide; the sequence is MKILEKALLENDSAAEEESRNLRTKR. 4 disulfide bridges follow: cysteine 27/cysteine 41, cysteine 34/cysteine 46, cysteine 40/cysteine 57, and cysteine 42/cysteine 68.

Expressed by the venom gland.

It is found in the secreted. Its function is as follows. Inhibits tetrodotoxin-sensitive sodium channels (Nav). Intracranial injection into mice causes strong convulsions and death. Intrathorax injection into crickets causes paralysis prolonged for 2 minutes, followed by recovery. This is Delta-hexatoxin-Mg1b from Macrothele gigas (Japanese funnel web spider).